Consider the following 125-residue polypeptide: Small ribosomal subunit protein uS13 (125 aa).

Positions Gln-90–Lys-125 are disordered.

This sequence belongs to the universal ribosomal protein uS13 family. Part of the 30S ribosomal subunit. Forms a loose heterodimer with protein S19. Forms two bridges to the 50S subunit in the 70S ribosome.

Located at the top of the head of the 30S subunit, it contacts several helices of the 16S rRNA. In the 70S ribosome it contacts the 23S rRNA (bridge B1a) and protein L5 of the 50S subunit (bridge B1b), connecting the 2 subunits; these bridges are implicated in subunit movement. Contacts the tRNAs in the A and P-sites. The sequence is that of Small ribosomal subunit protein uS13 from Bifidobacterium adolescentis (strain ATCC 15703 / DSM 20083 / NCTC 11814 / E194a).